A 347-amino-acid chain; its full sequence is N-acetyl-gamma-glutamyl-phosphate reductase (347 aa).

The active site involves C152.

It belongs to the NAGSA dehydrogenase family. Type 1 subfamily.

It localises to the cytoplasm. The catalysed reaction is N-acetyl-L-glutamate 5-semialdehyde + phosphate + NADP(+) = N-acetyl-L-glutamyl 5-phosphate + NADPH + H(+). It functions in the pathway amino-acid biosynthesis; L-arginine biosynthesis; N(2)-acetyl-L-ornithine from L-glutamate: step 3/4. In terms of biological role, catalyzes the NADPH-dependent reduction of N-acetyl-5-glutamyl phosphate to yield N-acetyl-L-glutamate 5-semialdehyde. The sequence is that of N-acetyl-gamma-glutamyl-phosphate reductase from Neisseria gonorrhoeae (strain NCCP11945).